Reading from the N-terminus, the 125-residue chain is Ribosome-binding factor A (125 aa).

The protein belongs to the RbfA family. As to quaternary structure, monomer. Binds 30S ribosomal subunits, but not 50S ribosomal subunits or 70S ribosomes.

The protein resides in the cytoplasm. Functionally, one of several proteins that assist in the late maturation steps of the functional core of the 30S ribosomal subunit. Associates with free 30S ribosomal subunits (but not with 30S subunits that are part of 70S ribosomes or polysomes). Required for efficient processing of 16S rRNA. May interact with the 5'-terminal helix region of 16S rRNA. This Acidovorax sp. (strain JS42) protein is Ribosome-binding factor A.